A 457-amino-acid polypeptide reads, in one-letter code: ADP-dependent glucose/glucosamine kinase (457 aa).

The ADPK domain occupies 5-457 (TNWESLYEKA…SAFVSEFSLH (453 aa)). Residues Asp-37, Glu-91, 115–116 (GQ), and His-179 each bind D-glucose. Residue Glu-269 participates in Mg(2+) binding. Asn-295 provides a ligand contact to ADP. Residue Glu-298 participates in Mg(2+) binding. Residues 345-346 (HT), Val-432, and Gly-442 each bind ADP. Asp-443 contacts D-glucose. Asp-443 lines the Mg(2+) pocket. Residue Asp-443 is the Proton acceptor of the active site.

The protein belongs to the ADP-dependent glucokinase family. Mg(2+) serves as cofactor.

The protein resides in the cytoplasm. It carries out the reaction D-glucose + ADP = D-glucose 6-phosphate + AMP + H(+). The enzyme catalyses D-glucosamine + ADP = D-glucosamine 6-phosphate + AMP + H(+). The protein operates within carbohydrate degradation; glycolysis. Its activity is regulated as follows. Inhibited by 8-bromoadenosine phosphate (8-Br-AMP). Functionally, catalyzes the ADP-dependent phosphorylation of D-glucose to D-glucose 6-phosphate and glucosamine to glucosamine 6-phosphate. This chain is ADP-dependent glucose/glucosamine kinase, found in Pyrococcus horikoshii (strain ATCC 700860 / DSM 12428 / JCM 9974 / NBRC 100139 / OT-3).